A 678-amino-acid polypeptide reads, in one-letter code: Probable metal-nicotianamine transporter YSL6 (678 aa).

The next 14 helical transmembrane spans lie at 41 to 61 (VTVR…LITH), 65 to 85 (LTVG…YFLV), 113 to 133 (CVVA…MLAM), 158 to 178 (LGWM…SLVA), 226 to 246 (ISFF…SCGF), 279 to 299 (IVNC…WPYI), 324 to 344 (VFIS…KIIY), 394 to 414 (LAGS…PMIF), 419 to 439 (WYLV…NSYG), 467 to 487 (GGVI…STAA), 512 to 532 (IGTT…WTAF), 561 to 581 (SALP…AILI), 606 to 626 (FYIG…LFVW), and 641 to 661 (IASG…ILSI).

Belongs to the YSL (TC 2.A.67.2) family. As to expression, expressed in roots and leaves.

The protein resides in the membrane. May be involved in the transport of nicotianamine-chelated metals. The protein is Probable metal-nicotianamine transporter YSL6 (YSL6) of Oryza sativa subsp. japonica (Rice).